We begin with the raw amino-acid sequence, 223 residues long: Endonuclease NucS (223 aa).

The protein belongs to the NucS endonuclease family.

Its subcellular location is the cytoplasm. Cleaves both 3' and 5' ssDNA extremities of branched DNA structures. The protein is Endonuclease NucS of Streptomyces griseus subsp. griseus (strain JCM 4626 / CBS 651.72 / NBRC 13350 / KCC S-0626 / ISP 5235).